Consider the following 113-residue polypeptide: Cytochrome c55X (113 aa).

A signal peptide spans 1 to 26 (MTVARHAVSRLGLALASFLLFPLALA). 3 residues coordinate heme c: C45, C48, and H49.

In terms of processing, binds 1 heme c group covalently per subunit.

The protein resides in the periplasm. Monoheme c-type cytochrome. This is Cytochrome c55X (nirC) from Stutzerimonas stutzeri (Pseudomonas stutzeri).